Consider the following 410-residue polypeptide: Porin-like protein GalP (410 aa).

Positions 1–25 are cleaved as a signal peptide; the sequence is MKCRTLYPLVPTFALAASLPLQALA.

It belongs to the outer membrane porin (Opr) (TC 1.B.25) family.

Functionally, probable transporter, possibly involved in the gallate degradation pathway. May play a role in the uptake of low gallate concentrations that may exist in the natural habitats of P.putida. In Pseudomonas putida (strain ATCC 47054 / DSM 6125 / CFBP 8728 / NCIMB 11950 / KT2440), this protein is Porin-like protein GalP (galP).